The primary structure comprises 507 residues: Glycerol kinase (507 aa).

An ADP-binding site is contributed by Thr-14. ATP contacts are provided by Thr-14, Thr-15, and Ser-16. Position 14 (Thr-14) interacts with sn-glycerol 3-phosphate. An ADP-binding site is contributed by Arg-18. Sn-glycerol 3-phosphate contacts are provided by Arg-84, Glu-85, Tyr-137, and Asp-247. Arg-84, Glu-85, Tyr-137, Asp-247, and Gln-248 together coordinate glycerol. ADP-binding residues include Thr-269 and Gly-312. Residues Thr-269, Gly-312, Gln-316, and Gly-413 each coordinate ATP. 2 residues coordinate ADP: Gly-413 and Asn-417.

Belongs to the FGGY kinase family.

It carries out the reaction glycerol + ATP = sn-glycerol 3-phosphate + ADP + H(+). It participates in polyol metabolism; glycerol degradation via glycerol kinase pathway; sn-glycerol 3-phosphate from glycerol: step 1/1. With respect to regulation, inhibited by fructose 1,6-bisphosphate (FBP). In terms of biological role, key enzyme in the regulation of glycerol uptake and metabolism. Catalyzes the phosphorylation of glycerol to yield sn-glycerol 3-phosphate. The sequence is that of Glycerol kinase from Psychromonas ingrahamii (strain DSM 17664 / CCUG 51855 / 37).